Consider the following 59-residue polypeptide: Large ribosomal subunit protein uL30 (59 aa).

It belongs to the universal ribosomal protein uL30 family. As to quaternary structure, part of the 50S ribosomal subunit.

This chain is Large ribosomal subunit protein uL30, found in Leptospira biflexa serovar Patoc (strain Patoc 1 / ATCC 23582 / Paris).